A 119-amino-acid chain; its full sequence is MRTIENSLLVFNQGEDEQPGRHEGVSVAPEKPALKRPARYRVVLLNDDYTPMDFVVDVLMKFFAMNEEKATQVMLLVHTQGKAVCGVYTRDIAETKAAQVNQYSSECEHPLLCEIERAD.

Belongs to the ClpS family. In terms of assembly, binds to the N-terminal domain of the chaperone ClpA.

Functionally, involved in the modulation of the specificity of the ClpAP-mediated ATP-dependent protein degradation. The chain is ATP-dependent Clp protease adapter protein ClpS from Marinobacter nauticus (strain ATCC 700491 / DSM 11845 / VT8) (Marinobacter aquaeolei).